The primary structure comprises 540 residues: tRNA-2-methylthio-N(6)-dimethylallyladenosine synthase (540 aa).

Residues 4-120 (RSYEVRTFGC…LPVLLERARH (117 aa)) form the MTTase N-terminal domain. Residues Cys13, Cys49, Cys83, Cys157, Cys161, and Cys164 each coordinate [4Fe-4S] cluster. The region spanning 143–374 (RASHHSAWVS…ALQDEISWAE (232 aa)) is the Radical SAM core domain. A TRAM domain is found at 376–468 (RALVGRRVEV…PHHLTADGPL (93 aa)). Residues 480–540 (WALGRDGDGG…ADACCTPVRR (61 aa)) are disordered. 2 stretches are compositionally biased toward low complexity: residues 492–502 (AAAQQPADGRP) and 520–533 (GPAS…GADA).

This sequence belongs to the methylthiotransferase family. MiaB subfamily. In terms of assembly, monomer. It depends on [4Fe-4S] cluster as a cofactor.

Its subcellular location is the cytoplasm. It catalyses the reaction N(6)-dimethylallyladenosine(37) in tRNA + (sulfur carrier)-SH + AH2 + 2 S-adenosyl-L-methionine = 2-methylsulfanyl-N(6)-dimethylallyladenosine(37) in tRNA + (sulfur carrier)-H + 5'-deoxyadenosine + L-methionine + A + S-adenosyl-L-homocysteine + 2 H(+). In terms of biological role, catalyzes the methylthiolation of N6-(dimethylallyl)adenosine (i(6)A), leading to the formation of 2-methylthio-N6-(dimethylallyl)adenosine (ms(2)i(6)A) at position 37 in tRNAs that read codons beginning with uridine. This chain is tRNA-2-methylthio-N(6)-dimethylallyladenosine synthase, found in Frankia casuarinae (strain DSM 45818 / CECT 9043 / HFP020203 / CcI3).